The chain runs to 1259 residues: Protein retinal degeneration B (1259 aa).

Residues 268–378 are disordered; it reads GGGEECSDDS…SKGALHSPVG (111 aa). Phosphoserine occurs at positions 274 and 277. Low complexity predominate over residues 284–293; the sequence is STAATAASTT. Residues 318–335 are compositionally biased toward acidic residues; it reads SSDEEGEEEEDDDEDEND. Over residues 347 to 363 the composition is skewed to low complexity; sequence QGGSAQRSRSQSIQMAQ. 3 positions are modified to phosphoserine: S401, S403, and S434. Disordered regions lie at residues 427–454, 472–500, and 660–692; these read LLGE…GNSR, RGNK…STPS, and SQPG…NSRL. Low complexity predominate over residues 663–678; the sequence is GTASGASNSGGDAATN. Polar residues predominate over residues 679-689; it reads INTHNPLSPRN. In terms of domain architecture, DDHD spans 730–913; it reads LDFEVCDFFM…IAFILRQIGK (184 aa).

The protein belongs to the PtdIns transfer protein family. PI transfer class IIA subfamily. Expressed in adult heads, not detected in bodies.

The enzyme catalyses a 1,2-diacyl-sn-glycero-3-phospho-(1D-myo-inositol)(in) = a 1,2-diacyl-sn-glycero-3-phospho-(1D-myo-inositol)(out). It catalyses the reaction a 1,2-diacyl-sn-glycero-3-phosphate(in) = a 1,2-diacyl-sn-glycero-3-phosphate(out). Functionally, catalyzes the transfer of phosphatidylinositol (PI) and phosphatidic acid (PA) between membranes. May control phosphatidylinositol concentration in transport vesicles from the subrhabdomeric cisternae (SRC) to the rhabdomere. May function as a calcium transporter. The protein is Protein retinal degeneration B (rdgB) of Drosophila melanogaster (Fruit fly).